A 534-amino-acid chain; its full sequence is Probable DNA polymerase epsilon subunit 2 (534 aa).

Belongs to the DNA polymerase epsilon subunit B family. As to quaternary structure, consists of four subunits.

It is found in the nucleus. In terms of biological role, accessory component of the DNA polymerase epsilon complex. Participates in DNA repair and in chromosomal DNA replication. The polypeptide is Probable DNA polymerase epsilon subunit 2 (pole-2) (Caenorhabditis elegans).